A 581-amino-acid chain; its full sequence is Activating signal cointegrator 1 (581 aa).

Ala-2 is subject to N-acetylalanine. Residues 100-121 (DQLKRSRRKGRNKQEVPAFPEP) form a disordered region. The C4-type zinc finger occupies 167-219 (GRHPCDCLGQKHKLINNCLVCGRIVCEQEGSGPCLFCGSLVCTNEEQDILQRD). The interval 200 to 300 (CLFCGSLVCT…ASDSNQWLSK (101 aa)) is mediates interaction with DDRGK1. Phosphoserine is present on Ser-276. Phosphotyrosine is present on Tyr-289. The tract at residues 300 to 400 (KVEREMLQKR…WVDNTGSTPQ (101 aa)) is mediates interaction with UFL1. Residues Lys-324 and Lys-334 each participate in a glycyl lysine isopeptide (Lys-Gly) (interchain with G-Cter in UFM1) cross-link. Over residues 390 to 406 (QWVDNTGSTPQKKTSLS) the composition is skewed to polar residues. Residues 390 to 410 (QWVDNTGSTPQKKTSLSAGPR) form a disordered region. Residues 437 to 531 (LSMHQPWASL…FQEQFPDISQ (95 aa)) form the ASCH domain.

As to quaternary structure, interacts with the thyroid hormone receptor/TR (via the ligand-binding domain); this interaction requires the presence of thyroid hormone. Interacts with the androgen receptor/AR; in an androgen, testosterone and dihydrotestosterone-dependent manner. Interacts with ESR1 (estrogen ligand-bound); competes with UFSP2. Interacts with UFSP2; competes with ligand-bound ESR1. Interacts with DDRGK1 and UFL1; the interaction with DDRGK1 is direct. Interacts with NCOA1. Interacts with EP300. Part of the ASC-1 complex, that contains TRIP4, ASCC1, ASCC2 and ASCC3. Identified in the RQT (ribosome quality control trigger) complex, that contains ASCC2, ASCC3 and TRIP4. Interacts with NEK6. Interacts with CSRP1. Interacts with ZCCHC4. Post-translationally, phosphorylated by NEK6. In terms of processing, polyufmylated by the UFM1-conjugating system composed of the enzymes UBA5, UFC1 and UFL1. Deufmylated by the protease UFSP2. Ufmylation of TRIP4 is promoted by ligand-bound nuclear receptors that compete with UFSP2 for interaction with TRIP4. Nuclear receptors-induced ufmylation promotes the recruitment of additional transcriptional coactivators like EP300 and NCOA1 and therefore the assembly of a coactivator complex facilitating nuclear receptor-mediated transcription. In terms of tissue distribution, ubiquitously expressed. Expressed in the spinal cord, brain, paraspinal ganglia, thyroid, and submandibular glands. Expressed at low level in all the muscles (at protein level) but with higher expression in axial than in limb muscles.

The protein resides in the nucleus. The protein localises to the cytoplasm. Its subcellular location is the cytosol. It localises to the cytoskeleton. It is found in the microtubule organizing center. The protein resides in the centrosome. Functionally, transcription coactivator which associates with nuclear receptors, transcriptional coactivators including EP300, CREBBP and NCOA1, and basal transcription factors like TBP and TFIIA to facilitate nuclear receptors-mediated transcription. May thereby play an important role in establishing distinct coactivator complexes under different cellular conditions. Plays a role in thyroid hormone receptor and estrogen receptor transactivation. Also involved in androgen receptor transactivation. Plays a pivotal role in the transactivation of NF-kappa-B, SRF and AP1. Acts as a mediator of transrepression between nuclear receptor and either AP1 or NF-kappa-B. May play a role in the development of neuromuscular junction. May play a role in late myogenic differentiation. Also functions as part of the RQC trigger (RQT) complex that activates the ribosome quality control (RQC) pathway, a pathway that degrades nascent peptide chains during problematic translation. The protein is Activating signal cointegrator 1 of Mus musculus (Mouse).